The chain runs to 286 residues: Phycobilisome 32.1 kDa linker polypeptide, phycocyanin-associated, rod (286 aa).

One can recognise a PBS-linker domain in the interval 2 to 180; the sequence is AITAAASRLG…LYRGYANSDR (179 aa). The CpcD-like domain maps to 234–286; the sequence is DRVYRIEVTGVRSPGYPSVRRSSYAIIVPYERLSEKIQQIHKLGGKIVSITSA.

The protein belongs to the phycobilisome linker protein family.

It is found in the cellular thylakoid membrane. Functionally, rod linker protein, associated with phycocyanin. Linker polypeptides determine the state of aggregation and the location of the disk-shaped phycobiliprotein units within the phycobilisome and modulate their spectroscopic properties in order to mediate a directed and optimal energy transfer. This Mastigocladus laminosus (Fischerella sp.) protein is Phycobilisome 32.1 kDa linker polypeptide, phycocyanin-associated, rod (cpcC).